A 585-amino-acid chain; its full sequence is Arginine--tRNA ligase (585 aa).

The 'HIGH' region motif lies at 131–141 (ANPTGPMHVGH).

This sequence belongs to the class-I aminoacyl-tRNA synthetase family. Monomer.

The protein resides in the cytoplasm. It carries out the reaction tRNA(Arg) + L-arginine + ATP = L-arginyl-tRNA(Arg) + AMP + diphosphate. The protein is Arginine--tRNA ligase of Rhizobium etli (strain ATCC 51251 / DSM 11541 / JCM 21823 / NBRC 15573 / CFN 42).